Consider the following 494-residue polypeptide: Acetylcholine receptor subunit epsilon (494 aa).

The signal sequence occupies residues 1–20; that stretch reads MTMALLGTLLLLALFGRSQG. Over 21–239 the chain is Extracellular; the sequence is KNEELSLYHH…VIYTLIIRRK (219 aa). Residues Asn86 and Asn161 are each glycosylated (N-linked (GlcNAc...) asparagine). An intrachain disulfide couples Cys148 to Cys162. The chain crosses the membrane as a helical span at residues 240 to 264; it reads PLFYVINIIVPCVLISGLVLLAYFL. Residues 265-272 are Cytoplasmic-facing; it reads PAQAGGQK. Residues 273–291 traverse the membrane as a helical segment; sequence CTVSINVLLAQTVFLFLIA. The Extracellular segment spans residues 292-306; the sequence is QKIPETSLSVPLLGR. Residues 307–328 form a helical membrane-spanning segment; that stretch reads YLIFVMVVATLIVMNCVIVLNV. Residues 329–457 are Cytoplasmic-facing; that stretch reads SLRTPTTHAT…WVRMGKALDN (129 aa). Residues 458–481 traverse the membrane as a helical segment; the sequence is VCFWAALVLFSVGSTLIFLGGYFN. Topologically, residues 482–494 are extracellular; that stretch reads QVPDLPYPPCIQP.

It belongs to the ligand-gated ion channel (TC 1.A.9) family. Acetylcholine receptor (TC 1.A.9.1) subfamily. Epsilon/CHRNE sub-subfamily. As to quaternary structure, pentamer of two alpha chains, and one each of the beta, delta, and gamma (in immature muscle) or epsilon (in mature muscle) chains. The muscle heteropentamer composed of alpha-1, beta-1, delta, epsilon subunits interacts with the alpha-conotoxin ImII.

The protein localises to the postsynaptic cell membrane. It localises to the cell membrane. It catalyses the reaction K(+)(in) = K(+)(out). It carries out the reaction Na(+)(in) = Na(+)(out). In terms of biological role, after binding acetylcholine, the AChR responds by an extensive change in conformation that affects all subunits and leads to opening of an ion-conducting channel across the plasma membrane. This Rattus norvegicus (Rat) protein is Acetylcholine receptor subunit epsilon (Chrne).